Consider the following 155-residue polypeptide: Large ribosomal subunit protein uL22 (155 aa).

The protein belongs to the universal ribosomal protein uL22 family. In terms of assembly, part of the 50S ribosomal subunit.

Its function is as follows. This protein binds specifically to 23S rRNA. It makes multiple contacts with different domains of the 23S rRNA in the assembled 50S subunit and ribosome. In terms of biological role, the globular domain of the protein is located near the polypeptide exit tunnel on the outside of the subunit, while an extended beta-hairpin is found that lines the wall of the exit tunnel in the center of the 70S ribosome. This is Large ribosomal subunit protein uL22 from Pyrococcus abyssi (strain GE5 / Orsay).